A 632-amino-acid chain; its full sequence is MSPDQTAVEYTAKDIEVLDDLEAVRKRPGMYIGGVGVRGLHHLLWEVVDNAVDEALAGYCDTIKVSLHKDGSASVEDNGRGIPTEMHELGKSALEIVMTKLHAGGKFSKKVYRVSGGLHGVGVSVVNALSEWLEVWVKRNGKIYYQKYQRGSRSPEAGHRTEVLGETKEHGTTVRFKPDREIFETTEFKYEIVAQRLKELAYLNRGLKIILFDEREGKEETFHFEDGIIGLVRSLNRNRKPLHEPIYIETTKDGVSVEVAIQFTDSDVENIQAFANNINTSEGGSHVVGFRAGLTRAVNEYGKKHLKKFEPVTGVDIREGLTAVISVKVPEPQFEGQTKTKLTNSDVKTVVESAVYSGVLRWLEENPAQAETLLNKFILNKKAREAAKRAKELVKRKNELITTLPGKLADCSSKNPEERELFIVEGESAGGSAKQARDRRFQAILPIKGKIINVEKAGMARVLKNDEIKAIISAIGAGIGKDFDITKARYRRIIIMTDADVDGAHIRTLLLTFFYRYMRPLIESGYLYIAQPPLYQIKKGKKSYYAYSDEELKRTLEQVGGGEVQRYKGLGEMNPQQLWETTMNPENRILIQVTLEDAKRADELFSILMGEDVESRRNFIMAHSKEVKNLDI.

The Toprim domain maps to 419 to 533 (RELFIVEGES…SGYLYIAQPP (115 aa)). Residues glutamate 425, aspartate 498, and aspartate 500 each contribute to the Mg(2+) site.

The protein belongs to the type II topoisomerase GyrB family. As to quaternary structure, heterotetramer, composed of two GyrA and two GyrB chains. In the heterotetramer, GyrA contains the active site tyrosine that forms a transient covalent intermediate with DNA, while GyrB binds cofactors and catalyzes ATP hydrolysis. Mg(2+) serves as cofactor. The cofactor is Mn(2+). Requires Ca(2+) as cofactor.

The protein resides in the cytoplasm. The catalysed reaction is ATP-dependent breakage, passage and rejoining of double-stranded DNA.. Functionally, a type II topoisomerase that negatively supercoils closed circular double-stranded (ds) DNA in an ATP-dependent manner to modulate DNA topology and maintain chromosomes in an underwound state. Negative supercoiling favors strand separation, and DNA replication, transcription, recombination and repair, all of which involve strand separation. Also able to catalyze the interconversion of other topological isomers of dsDNA rings, including catenanes and knotted rings. Type II topoisomerases break and join 2 DNA strands simultaneously in an ATP-dependent manner. The polypeptide is DNA gyrase subunit B (Archaeoglobus fulgidus (strain ATCC 49558 / DSM 4304 / JCM 9628 / NBRC 100126 / VC-16)).